A 226-amino-acid chain; its full sequence is Biosynthetic peptidoglycan transglycosylase (226 aa).

A helical membrane pass occupies residues 5 to 25 (IGVTVLAVVGLLLLPYLLTPL).

This sequence belongs to the glycosyltransferase 51 family.

The protein resides in the cell inner membrane. It carries out the reaction [GlcNAc-(1-&gt;4)-Mur2Ac(oyl-L-Ala-gamma-D-Glu-L-Lys-D-Ala-D-Ala)](n)-di-trans,octa-cis-undecaprenyl diphosphate + beta-D-GlcNAc-(1-&gt;4)-Mur2Ac(oyl-L-Ala-gamma-D-Glu-L-Lys-D-Ala-D-Ala)-di-trans,octa-cis-undecaprenyl diphosphate = [GlcNAc-(1-&gt;4)-Mur2Ac(oyl-L-Ala-gamma-D-Glu-L-Lys-D-Ala-D-Ala)](n+1)-di-trans,octa-cis-undecaprenyl diphosphate + di-trans,octa-cis-undecaprenyl diphosphate + H(+). The protein operates within cell wall biogenesis; peptidoglycan biosynthesis. In terms of biological role, peptidoglycan polymerase that catalyzes glycan chain elongation from lipid-linked precursors. In Nitrobacter hamburgensis (strain DSM 10229 / NCIMB 13809 / X14), this protein is Biosynthetic peptidoglycan transglycosylase.